A 402-amino-acid polypeptide reads, in one-letter code: E3 ubiquitin-protein ligase makorin-2 (402 aa).

3 consecutive C3H1-type zinc fingers follow at residues 2–29, 31–58, and 141–168; these read TTKQ…HDPS, SKPS…HVKL, and QDLP…HGDK. The interval 169 to 198 is makorin-type Cys-His; sequence CEVCGLQVLDPHNPEQRSMHEKMCLLAFEA. An RING-type zinc finger spans residues 214-268; the sequence is CSICMEVVVQKMNPSDRRFGILSSCCHVFCLACIRKWRCTRNFSNKIIKSCPECR. The C3H1-type 4 zinc-finger motif lies at 297 to 326; the sequence is GVGKKPCKYFDQGRGSCPFGGKCLYLHALP.

Its subcellular location is the cytoplasm. It is found in the nucleus. It catalyses the reaction S-ubiquitinyl-[E2 ubiquitin-conjugating enzyme]-L-cysteine + [acceptor protein]-L-lysine = [E2 ubiquitin-conjugating enzyme]-L-cysteine + N(6)-ubiquitinyl-[acceptor protein]-L-lysine.. It participates in protein modification; protein ubiquitination. E3 ubiquitin ligase catalyzing the covalent attachment of ubiquitin moieties onto substrate proteins. Inhibits neurogenesis and axis formation during embryonic development by modulating the phosphatidylinositol 3-kinase (PI3K) pathway. Acts downstream of PI3K and akt1 to up-regulate gsk3b mRNA expression. The sequence is that of E3 ubiquitin-protein ligase makorin-2 from Takifugu rubripes (Japanese pufferfish).